A 365-amino-acid polypeptide reads, in one-letter code: MKEVKEALFMNKGEGESSYAQNSSFTQTVTSMTMPVLENAVETLFSKDFHLLQALNAVDLGCAAGPTTFTVISTIKRMMEKKCRELNCQTLELQVYLNDLPGNDFNTLFKGLPSKVVGNKCEEVSCYVVGVPGSFHGRLFPRNSLHLVHSCYSVHWLTQAPKGLTSKEGLALNKGKIYISKTSPPVVREAYLSQFHEDFTMFLNSRSQEVVPNGCMVLILRGRLSSDPSDMGSCFTWELLAVAIAELVSQGLIDEDKLDTFNVPSYFPSLEEVKDIVERNGSFTIDHMEGFELDSPEMQENDKWVRGEKFATVARAFTEPIISNQFGHEIMDKLYEKFTHIVVSDFEAKIPKITSIILVLSKIVG.

Tyrosine 19 contacts S-adenosyl-L-homocysteine. Caffeine is bound at residue threonine 26. Residues cysteine 62, aspartate 99, leucine 100, serine 134, and phenylalanine 135 each contribute to the S-adenosyl-L-homocysteine site. Tyrosine 152, histidine 155, and tryptophan 156 together coordinate caffeine. Mg(2+) is bound at residue asparagine 173. A caffeine-binding site is contributed by arginine 221. Aspartate 259, phenylalanine 261, and asparagine 262 together coordinate Mg(2+). Residue phenylalanine 317 participates in caffeine binding.

It belongs to the methyltransferase superfamily. Type-7 methyltransferase family. Mg(2+) is required as a cofactor.

The enzyme catalyses 7-methylxanthine + S-adenosyl-L-methionine = theobromine + S-adenosyl-L-homocysteine + H(+). It catalyses the reaction theobromine + S-adenosyl-L-methionine = caffeine + S-adenosyl-L-homocysteine + H(+). The catalysed reaction is 1,7-dimethylxanthine + S-adenosyl-L-methionine = caffeine + S-adenosyl-L-homocysteine + H(+). The protein operates within alkaloid biosynthesis. May be involved in the biosynthesis of caffeine. Catalyzes the conversion of 7-methylxanthine (7mX) to theobromine and of theobromine to caffeine. Has 1-N-methylation activity. The protein is Probable caffeine synthase 2 of Camellia sinensis (Tea plant).